A 176-amino-acid polypeptide reads, in one-letter code: Adenine phosphoribosyltransferase (176 aa).

Belongs to the purine/pyrimidine phosphoribosyltransferase family. Homodimer.

The protein resides in the cytoplasm. The catalysed reaction is AMP + diphosphate = 5-phospho-alpha-D-ribose 1-diphosphate + adenine. It participates in purine metabolism; AMP biosynthesis via salvage pathway; AMP from adenine: step 1/1. In terms of biological role, catalyzes a salvage reaction resulting in the formation of AMP, that is energically less costly than de novo synthesis. This chain is Adenine phosphoribosyltransferase, found in Leuconostoc mesenteroides subsp. mesenteroides (strain ATCC 8293 / DSM 20343 / BCRC 11652 / CCM 1803 / JCM 6124 / NCDO 523 / NBRC 100496 / NCIMB 8023 / NCTC 12954 / NRRL B-1118 / 37Y).